Reading from the N-terminus, the 227-residue chain is PKHD-type hydroxylase BTH_II1201 (227 aa).

Residues 78 to 178 (KVFPPLFNRY…RVASFFWIQS (101 aa)) form the Fe2OG dioxygenase domain. His-96, Asp-98, and His-159 together coordinate Fe cation. Arg-169 is a 2-oxoglutarate binding site.

Fe(2+) is required as a cofactor. The cofactor is L-ascorbate.

This is PKHD-type hydroxylase BTH_II1201 from Burkholderia thailandensis (strain ATCC 700388 / DSM 13276 / CCUG 48851 / CIP 106301 / E264).